A 217-amino-acid chain; its full sequence is Small ribosomal subunit protein uS3 (217 aa).

One can recognise a KH type-2 domain in the interval 38–106 (IRKFIDNELK…KVHINVIEIK (69 aa)).

This sequence belongs to the universal ribosomal protein uS3 family. As to quaternary structure, part of the 30S ribosomal subunit. Forms a tight complex with proteins S10 and S14.

Binds the lower part of the 30S subunit head. Binds mRNA in the 70S ribosome, positioning it for translation. The polypeptide is Small ribosomal subunit protein uS3 (Staphylococcus haemolyticus (strain JCSC1435)).